The primary structure comprises 371 residues: Glutamate 5-kinase 2 (371 aa).

An ATP-binding site is contributed by K13. 3 residues coordinate substrate: S53, D140, and N152. Residues 172-173 (SD) and 214-220 (TGGMRSK) each bind ATP. The region spanning 280–356 (EGEMILSDDC…KELTNRALID (77 aa)) is the PUA domain.

It belongs to the glutamate 5-kinase family.

It localises to the cytoplasm. It carries out the reaction L-glutamate + ATP = L-glutamyl 5-phosphate + ADP. The protein operates within amino-acid biosynthesis; L-proline biosynthesis; L-glutamate 5-semialdehyde from L-glutamate: step 1/2. Its function is as follows. Catalyzes the transfer of a phosphate group to glutamate to form L-glutamate 5-phosphate. This Bacillus subtilis (strain 168) protein is Glutamate 5-kinase 2 (proJ).